The primary structure comprises 364 residues: UDP-N-acetylglucosamine--N-acetylmuramyl-(pentapeptide) pyrophosphoryl-undecaprenol N-acetylglucosamine transferase (364 aa).

Residues 10-12 (TGG), Asn128, Arg170, Ser199, Ile250, and Gln295 contribute to the UDP-N-acetyl-alpha-D-glucosamine site.

This sequence belongs to the glycosyltransferase 28 family. MurG subfamily.

Its subcellular location is the cell inner membrane. The enzyme catalyses di-trans,octa-cis-undecaprenyl diphospho-N-acetyl-alpha-D-muramoyl-L-alanyl-D-glutamyl-meso-2,6-diaminopimeloyl-D-alanyl-D-alanine + UDP-N-acetyl-alpha-D-glucosamine = di-trans,octa-cis-undecaprenyl diphospho-[N-acetyl-alpha-D-glucosaminyl-(1-&gt;4)]-N-acetyl-alpha-D-muramoyl-L-alanyl-D-glutamyl-meso-2,6-diaminopimeloyl-D-alanyl-D-alanine + UDP + H(+). The protein operates within cell wall biogenesis; peptidoglycan biosynthesis. Cell wall formation. Catalyzes the transfer of a GlcNAc subunit on undecaprenyl-pyrophosphoryl-MurNAc-pentapeptide (lipid intermediate I) to form undecaprenyl-pyrophosphoryl-MurNAc-(pentapeptide)GlcNAc (lipid intermediate II). This chain is UDP-N-acetylglucosamine--N-acetylmuramyl-(pentapeptide) pyrophosphoryl-undecaprenol N-acetylglucosamine transferase, found in Chlorobaculum tepidum (strain ATCC 49652 / DSM 12025 / NBRC 103806 / TLS) (Chlorobium tepidum).